The chain runs to 572 residues: Dityrosine transporter 1 (572 aa).

2 disordered regions span residues 1-28 (MGSE…STFH) and 49-95 (RANI…SPDT). At 1–110 (MGSEPFQKKN…YTYFSKDQRL (110 aa)) the chain is on the cytoplasmic side. The span at 13–28 (LQINSQESGTTRSTFH) shows a compositional bias: polar residues. The span at 50 to 62 (ANIDHDVFHEHPD) shows a compositional bias: basic and acidic residues. Polar residues predominate over residues 83-95 (SSNSQSRDPSPDT). Residues 111-131 (IIFGIIIFIGFLGPMSGNIYI) traverse the membrane as a helical segment. Residues 132-149 (PALPLLQREYDVSATTIN) lie on the Extracellular side of the membrane. Residues 150-170 (ATVSVFMAVFSVGPLFWGALA) form a helical membrane-spanning segment. Topologically, residues 171–184 (DFGGRKFLYMVSLS) are cytoplasmic. A helical membrane pass occupies residues 185-205 (LMLIVNILLAAVPVNIAALFV). The Extracellular segment spans residues 206–207 (LR). The helical transmembrane segment at 208–228 (IFQAFASSSVISLGAGTVTDV) threads the bilayer. Residues 229 to 240 (VPPKHRGKAIAY) lie on the Cytoplasmic side of the membrane. The chain crosses the membrane as a helical span at residues 241 to 261 (FMMGPNMGPIIAPIVAGLILM). Residues 262–267 (KGNYWR) lie on the Extracellular side of the membrane. Residues 268 to 288 (WLFGFTSIMTGIALILVTALL) traverse the membrane as a helical segment. Residues 289 to 366 (PETLRCIVGN…TLYWKMIKCP (78 aa)) are Cytoplasmic-facing. Residues 367 to 387 (PIIITSVSTALLFSSYYAFSV) form a helical membrane-spanning segment. The Extracellular segment spans residues 388 to 398 (TFSYYLEHDYR). Residues 399–419 (FTMLEIGAAYVCPGVAMLLGS) form a helical membrane-spanning segment. Topologically, residues 420 to 446 (QSGGHLSDYLRSRWIKSHPKKKFPAEF) are cytoplasmic. The chain crosses the membrane as a helical span at residues 447 to 469 (RLLLNLIGILLTICGTIGYGWAI). The Extracellular portion of the chain corresponds to 470 to 472 (FFH). A helical membrane pass occupies residues 473-493 (YHFVVLLVFSALTAFGMTWCS). Residues 494-520 (NTSMTYLTELFPKRAAGTVAVSSFFRN) lie on the Cytoplasmic side of the membrane. The helical transmembrane segment at 521–541 (VGAAISSAIILQLCNAMGIGW) threads the bilayer. Cysteine 542 is a topological domain (extracellular). A helical transmembrane segment spans residues 543-563 (FTGLGLCSSISLIGILYLLIF). The segment at 548-572 (LCSSISLIGILYLLIFQRKYTAKEF) is required for the localization to the prospore membrane. Residues 564–572 (QRKYTAKEF) are Cytoplasmic-facing.

The protein belongs to the major facilitator superfamily. CAR1 family. Phosphorylated.

It localises to the prospore membrane. Prospore-specific dityrosine transporter responsible for translocation of dityrosine through the prospore membrane and required for the formation of the outermost layer of the spore. The protein is Dityrosine transporter 1 (DTR1) of Saccharomyces cerevisiae (strain ATCC 204508 / S288c) (Baker's yeast).